The primary structure comprises 268 residues: Putative type I specificity subunit S.MpnORF365P (268 aa).

This sequence belongs to the type-I restriction system S methylase family. In terms of assembly, the methyltransferase is composed of M and S polypeptides.

In terms of biological role, the specificity (S) subunit of a type I methyltransferase (MTase); this subunit dictates DNA sequence specificity. The single R subunit has multiple frameshifts and is probably not expressed. The chain is Putative type I specificity subunit S.MpnORF365P from Mycoplasma pneumoniae (strain ATCC 29342 / M129 / Subtype 1) (Mycoplasmoides pneumoniae).